The primary structure comprises 157 residues: Peptide methionine sulfoxide reductase MsrA (157 aa).

Cysteine 10 is an active-site residue.

Belongs to the MsrA Met sulfoxide reductase family.

It catalyses the reaction L-methionyl-[protein] + [thioredoxin]-disulfide + H2O = L-methionyl-(S)-S-oxide-[protein] + [thioredoxin]-dithiol. The enzyme catalyses [thioredoxin]-disulfide + L-methionine + H2O = L-methionine (S)-S-oxide + [thioredoxin]-dithiol. Has an important function as a repair enzyme for proteins that have been inactivated by oxidation. Catalyzes the reversible oxidation-reduction of methionine sulfoxide in proteins to methionine. This chain is Peptide methionine sulfoxide reductase MsrA, found in Clostridium botulinum (strain Kyoto / Type A2).